A 162-amino-acid polypeptide reads, in one-letter code: Peptide deformylase (162 aa).

Fe cation-binding residues include Cys-86 and His-128. The active site involves Glu-129. Position 132 (His-132) interacts with Fe cation.

The protein belongs to the polypeptide deformylase family. It depends on Fe(2+) as a cofactor.

The enzyme catalyses N-terminal N-formyl-L-methionyl-[peptide] + H2O = N-terminal L-methionyl-[peptide] + formate. In terms of biological role, removes the formyl group from the N-terminal Met of newly synthesized proteins. Requires at least a dipeptide for an efficient rate of reaction. N-terminal L-methionine is a prerequisite for activity but the enzyme has broad specificity at other positions. The sequence is that of Peptide deformylase from Treponema pallidum (strain Nichols).